The primary structure comprises 344 residues: Arginine N-succinyltransferase (344 aa).

A succinyl-CoA-binding site is contributed by L125. H229 serves as the catalytic Proton donor.

Belongs to the arginine N-succinyltransferase family.

The enzyme catalyses succinyl-CoA + L-arginine = N(2)-succinyl-L-arginine + CoA + H(+). Its pathway is amino-acid degradation; L-arginine degradation via AST pathway; L-glutamate and succinate from L-arginine: step 1/5. Functionally, catalyzes the transfer of succinyl-CoA to arginine to produce N(2)-succinylarginine. This is Arginine N-succinyltransferase from Escherichia coli O6:H1 (strain CFT073 / ATCC 700928 / UPEC).